The sequence spans 573 residues: Proline--tRNA ligase (573 aa).

This sequence belongs to the class-II aminoacyl-tRNA synthetase family. ProS type 1 subfamily. Homodimer.

It is found in the cytoplasm. It carries out the reaction tRNA(Pro) + L-proline + ATP = L-prolyl-tRNA(Pro) + AMP + diphosphate. In terms of biological role, catalyzes the attachment of proline to tRNA(Pro) in a two-step reaction: proline is first activated by ATP to form Pro-AMP and then transferred to the acceptor end of tRNA(Pro). As ProRS can inadvertently accommodate and process non-cognate amino acids such as alanine and cysteine, to avoid such errors it has two additional distinct editing activities against alanine. One activity is designated as 'pretransfer' editing and involves the tRNA(Pro)-independent hydrolysis of activated Ala-AMP. The other activity is designated 'posttransfer' editing and involves deacylation of mischarged Ala-tRNA(Pro). The misacylated Cys-tRNA(Pro) is not edited by ProRS. This Cupriavidus taiwanensis (strain DSM 17343 / BCRC 17206 / CCUG 44338 / CIP 107171 / LMG 19424 / R1) (Ralstonia taiwanensis (strain LMG 19424)) protein is Proline--tRNA ligase.